Consider the following 130-residue polypeptide: MSWQAYVDEHLMCEIEGHHLTSAAIVGHDGAVWAQSTAFPQFKTEEMTNIMKDFDEPGFLAPTGLFLGPTKYMVIQGEPGAVIRGKKGSGGITVKKTGQAMVVGIYDEPMTPGQCNMVVERLGDYLLNRA.

A disulfide bridge connects residues Cys-13 and Cys-115. Residues 81-97 (AVIRGKKGSGGITVKKT) carry the Involved in PIP2 interaction motif. Thr-111 is modified (phosphothreonine).

It belongs to the profilin family. In terms of assembly, occurs in many kinds of cells as a complex with monomeric actin in a 1:1 ratio. In terms of processing, phosphorylated by MAP kinases.

The protein localises to the cytoplasm. It is found in the cytoskeleton. Its function is as follows. Binds to actin and affects the structure of the cytoskeleton. At high concentrations, profilin prevents the polymerization of actin, whereas it enhances it at low concentrations. This is Profilin-12 from Zea mays (Maize).